Consider the following 209-residue polypeptide: Ion-translocating oxidoreductase complex subunit G (209 aa).

Residues 9 to 29 traverse the membrane as a helical segment; it reads GITLAIFAALTTGLTAVVNSL. FMN phosphoryl threonine is present on Thr-175.

Belongs to the RnfG family. As to quaternary structure, the complex is composed of six subunits: RnfA, RnfB, RnfC, RnfD, RnfE and RnfG. Requires FMN as cofactor.

It localises to the cell inner membrane. Part of a membrane-bound complex that couples electron transfer with translocation of ions across the membrane. In Photorhabdus laumondii subsp. laumondii (strain DSM 15139 / CIP 105565 / TT01) (Photorhabdus luminescens subsp. laumondii), this protein is Ion-translocating oxidoreductase complex subunit G.